The sequence spans 746 residues: Histone-lysine N-methyltransferase EZH2 (746 aa).

An interaction with DNMT1, DNMT3A and DNMT3B region spans residues Met-1 to Ala-340. Ser-21 is modified (phosphoserine; by PKB/AKT1). The interval Lys-39 to Val-68 is interaction with EED. Ser-75 is a glycosylation site (O-linked (GlcNAc) serine). The residue at position 76 (Ser-76) is a Phosphoserine. A disordered region spans residues Gln-180 to Lys-217. A compositionally biased stretch (acidic residues) spans Asn-182–Glu-195. The segment covering Arg-196 to Lys-217 has biased composition (basic and acidic residues). The interaction with CDYL stretch occupies residues Glu-329 to Pro-522. A Phosphothreonine modification is found at Thr-339. A disordered region spans residues Ala-340–Pro-426. Thr-345 carries the post-translational modification Phosphothreonine; by CDK1 and CDK2. The span at Thr-345–Arg-357 shows a compositional bias: basic residues. Phosphoserine occurs at positions 363 and 366. Thr-367 is modified (phosphothreonine). The segment covering Glu-374–Gly-385 has biased composition (basic and acidic residues). Thr-487 is subject to Phosphothreonine. Residues Cys-503–Ser-605 enclose the CXC domain. The 116-residue stretch at Lys-612–Arg-727 folds into the SET domain. Residue Lys-634 forms a Glycyl lysine isopeptide (Lys-Gly) (interchain with G-Cter in SUMO2) linkage.

The protein belongs to the class V-like SAM-binding methyltransferase superfamily. Histone-lysine methyltransferase family. EZ subfamily. As to quaternary structure, component of the PRC2/EED-EZH2 complex, which includes EED, EZH2, SUZ12, RBBP4 and RBBP7 and possibly AEBP2. The minimum components required for methyltransferase activity of the PRC2/EED-EZH2 complex are EED, EZH2 and SUZ12. The PRC2 complex may also interact with DNMT1, DNMT3A, DNMT3B and PHF1 via the EZH2 subunit and with SIRT1 via the SUZ12 subunit. Interacts with HDAC1 and HDAC2. Binds ATRX via the SET domain. Interacts with PRAME. Interacts with CDYL. Interacts with EED. Interacts with BMAL1. Interacts with CLOCK and CRY1. Interacts with DNMT3L; the interaction is direct. Interacts with EZHIP; the interaction blocks EZH2 methyltransferase activity. Interacts with ZNF263; recruited to the SIX3 promoter along with other proteins involved in chromatin modification and transcriptional corepression where it contributes to transcriptional repression. Interacts with ARMC12. Interacts with ZMYND8; the interaction is dependent on the presence of chromatin. Interacts with DDX18; this interaction inhibits the PRC2 complex. Phosphorylated by AKT1. Phosphorylation by AKT1 reduces methyltransferase activity. Phosphorylation at Thr-345 by CDK1 and CDK2 promotes maintenance of H3K27me3 levels at EZH2-target loci, thus leading to epigenetic gene silencing. In terms of processing, sumoylated. Post-translationally, glycosylated: O-GlcNAcylation at Ser-75 by OGT increases stability of EZH2 and facilitates the formation of H3K27me3 by the PRC2/EED-EZH2 complex. As to expression, present in actively dividing cells. Widely expressed in early embryos. In later embryogenesis, expression restricted to central and peripheral nervous system, liver and thymus. In adult, highest expression in spleen, testis and placenta. Lower levels in intestine, muscle and ovary and very low levels in brain and liver. No expression in heart, thyroid gland, lung and kidney.

The protein localises to the nucleus. It localises to the chromosome. It catalyses the reaction L-lysyl(27)-[histone H3] + 3 S-adenosyl-L-methionine = N(6),N(6),N(6)-trimethyl-L-lysyl(27)-[histone H3] + 3 S-adenosyl-L-homocysteine + 3 H(+). In terms of biological role, polycomb group (PcG) protein. Catalytic subunit of the PRC2/EED-EZH2 complex, which methylates (H3K9me) and 'Lys-27' (H3K27me) of histone H3, leading to transcriptional repression of the affected target gene. Able to mono-, di- and trimethylate 'Lys-27' of histone H3 to form H3K27me1, H3K27me2 and H3K27me3, respectively. Displays a preference for substrates with less methylation, loses activity when progressively more methyl groups are incorporated into H3K27, H3K27me0 &gt; H3K27me1 &gt; H3K27me2. Compared to EZH1-containing complexes, it is more abundant in embryonic stem cells and plays a major role in forming H3K27me3, which is required for embryonic stem cell identity and proper differentiation. The PRC2/EED-EZH2 complex may also serve as a recruiting platform for DNA methyltransferases, thereby linking two epigenetic repression systems. Genes repressed by the PRC2/EED-EZH2 complex include HOXA7, HOXB6 and HOXC8. EZH2 can also methylate non-histone proteins such as the transcription factor GATA4 and the nuclear receptor RORA. Regulates the circadian clock via histone methylation at the promoter of the circadian genes. Essential for the CRY1/2-mediated repression of the transcriptional activation of PER1/2 by the CLOCK-BMAL1 heterodimer; involved in the di and trimethylation of 'Lys-27' of histone H3 on PER1/2 promoters which is necessary for the CRY1/2 proteins to inhibit transcription. This Mus musculus (Mouse) protein is Histone-lysine N-methyltransferase EZH2.